A 484-amino-acid polypeptide reads, in one-letter code: MLIFELSKTGRQAKAQIPRAVSKNYSIPEEFQRKSRPRLPACSELQVVRHFTCLSQKNFSIDTNFYPLGSCTMKYNPRGVHKAASLPGFINRHPLAMDNESQGFLETLYKLQNYISEITGMPGVSLTPMAGSQGEFAGVAMIKAYHQSRGDTARDEILIPDAAHGTNPASAVMCGFKVVEIATAPDGDIDLDELKRKVGPRTAGIMLTNPSTLGLFMRQIKEIASLVHQAGGLLYYDGANLNAILGKVRPGDMGFDVMHLNLHKTFATPHGGGGPGAGPVAVGKRLIPYMPLPVVKKTDSGYHWATRQDYPQSIGRLSCFMGNAGILLRAYFYMLVLGKEGLLRVSEFATLNANYLLKELTKVGYTAAYPDRRASHEFILTLNSEKKNYDVTAMDFAKRLLDYGVHAPTTYFPLLVPECLLIEPPETESKEELDAFVAVMKTIREEASKQPDILKAAPHTLPVKRLDDVKAARELDLNYFATHE.

Lysine 264 carries the post-translational modification N6-(pyridoxal phosphate)lysine.

The protein belongs to the GcvP family. C-terminal subunit subfamily. The glycine cleavage system is composed of four proteins: P, T, L and H. In this organism, the P 'protein' is a heterodimer of two subunits. Pyridoxal 5'-phosphate is required as a cofactor.

The catalysed reaction is N(6)-[(R)-lipoyl]-L-lysyl-[glycine-cleavage complex H protein] + glycine + H(+) = N(6)-[(R)-S(8)-aminomethyldihydrolipoyl]-L-lysyl-[glycine-cleavage complex H protein] + CO2. Functionally, the glycine cleavage system catalyzes the degradation of glycine. The P protein binds the alpha-amino group of glycine through its pyridoxal phosphate cofactor; CO(2) is released and the remaining methylamine moiety is then transferred to the lipoamide cofactor of the H protein. The protein is Probable glycine dehydrogenase (decarboxylating) subunit 2 of Legionella pneumophila (strain Lens).